A 528-amino-acid chain; its full sequence is Folylpolyglutamate synthase (528 aa).

Gly-104 to Gly-107 contributes to the ATP binding site. Mg(2+)-binding residues include Ser-134, Glu-208, and His-236. 2 residues coordinate ATP: Arg-351 and Asp-365.

The protein belongs to the folylpolyglutamate synthase family. It depends on a monovalent cation as a cofactor.

The protein resides in the mitochondrion inner membrane. It localises to the mitochondrion matrix. It is found in the cytoplasm. It carries out the reaction (6S)-5,6,7,8-tetrahydrofolyl-(gamma-L-Glu)(n) + L-glutamate + ATP = (6S)-5,6,7,8-tetrahydrofolyl-(gamma-L-Glu)(n+1) + ADP + phosphate + H(+). The protein operates within cofactor biosynthesis; tetrahydrofolylpolyglutamate biosynthesis. In terms of biological role, catalyzes conversion of folates to polyglutamate derivatives allowing concentration of folate compounds in the cell and the intracellular retention of these cofactors, which are important substrates for most of the folate-dependent enzymes that are involved in one-carbon transfer reactions involved in purine, pyrimidine and amino acid synthesis. This chain is Folylpolyglutamate synthase (met-6), found in Neurospora crassa (strain ATCC 24698 / 74-OR23-1A / CBS 708.71 / DSM 1257 / FGSC 987).